Here is a 332-residue protein sequence, read N- to C-terminus: ATPase GET3 (332 aa).

An ATP-binding site is contributed by 32–39 (KGGVGKTT). D61 is a catalytic residue. 2 residues coordinate ATP: E235 and N262. C273 and C276 together coordinate Zn(2+).

The protein belongs to the arsA ATPase family. Homodimer.

Its subcellular location is the cytoplasm. It is found in the endoplasmic reticulum. Functionally, ATPase required for the post-translational delivery of tail-anchored (TA) proteins to the endoplasmic reticulum. Recognizes and selectively binds the transmembrane domain of TA proteins in the cytosol. This complex then targets to the endoplasmic reticulum by membrane-bound receptors, where the tail-anchored protein is released for insertion. This process is regulated by ATP binding and hydrolysis. ATP binding drives the homodimer towards the closed dimer state, facilitating recognition of newly synthesized TA membrane proteins. ATP hydrolysis is required for insertion. Subsequently, the homodimer reverts towards the open dimer state, lowering its affinity for the membrane-bound receptor, and returning it to the cytosol to initiate a new round of targeting. The protein is ATPase GET3 of Mycosarcoma maydis (Corn smut fungus).